A 562-amino-acid chain; its full sequence is Catalase T (562 aa).

Active-site residues include His64 and Asn137. Tyr351 is a heme binding site.

Belongs to the catalase family. As to quaternary structure, homotetramer. It depends on heme as a cofactor.

Its subcellular location is the cytoplasm. The catalysed reaction is 2 H2O2 = O2 + 2 H2O. Occurs in almost all aerobically respiring organisms and serves to protect cells from the toxic effects of hydrogen peroxide. This chain is Catalase T (CTT1), found in Saccharomyces cerevisiae (strain ATCC 204508 / S288c) (Baker's yeast).